Here is a 223-residue protein sequence, read N- to C-terminus: UPF0758 protein Tgr7_0100 (223 aa).

The MPN domain maps to 102–223 (ALTSPDDTRR…LVSFAERGLL (122 aa)). Residues H173, H175, and D186 each coordinate Zn(2+). Positions 173–186 (HNHPSGVAEPSRSD) match the JAMM motif motif.

Belongs to the UPF0758 family.

This chain is UPF0758 protein Tgr7_0100, found in Thioalkalivibrio sulfidiphilus (strain HL-EbGR7).